A 156-amino-acid chain; its full sequence is Nuclear cap-binding protein subunit 2 (156 aa).

Ser2 bears the N-acetylserine mark. A phosphoserine mark is found at Ser13 and Ser18. Residues Tyr20, Tyr43, Arg112 to Asp116, Arg123 to Arg127, and Gln133 to Val134 contribute to the mRNA site. Positions Cys40–Gly118 constitute an RRM domain. Positions Gln124 to Gln156 are disordered. Basic and acidic residues predominate over residues Val134–Ala144. Arg146 is modified (omega-N-methylarginine).

The protein belongs to the RRM NCBP2 family. Component of the nuclear cap-binding complex (CBC), a heterodimer composed of NCBP1/CBP80 and NCBP2/CBP20 that interacts with m7GpppG-capped RNA. Found in a U snRNA export complex with PHAX/RNUXA, NCBP1/CBP80, NCBP2/CBP20, RAN, XPO1 and m7G-capped RNA. Interacts with PHAX/RNUXA, EIF4G1, HNRNPF, HNRNPH1 and ALYREF/THOC4/ALY. Interacts with SRRT/ARS2 and KPNA3.

Its subcellular location is the nucleus. The protein localises to the cytoplasm. Functionally, component of the cap-binding complex (CBC), which binds co-transcriptionally to the 5' cap of pre-mRNAs and is involved in various processes such as pre-mRNA splicing, translation regulation, nonsense-mediated mRNA decay, RNA-mediated gene silencing (RNAi) by microRNAs (miRNAs) and mRNA export. The CBC complex is involved in mRNA export from the nucleus via its interaction with ALYREF/THOC4/ALY, leading to the recruitment of the mRNA export machinery to the 5' end of mRNA and to mRNA export in a 5' to 3' direction through the nuclear pore. The CBC complex is also involved in mediating U snRNA and intronless mRNAs export from the nucleus. The CBC complex is essential for a pioneer round of mRNA translation, before steady state translation when the CBC complex is replaced by cytoplasmic cap-binding protein eIF4E. The pioneer round of mRNA translation mediated by the CBC complex plays a central role in nonsense-mediated mRNA decay (NMD), NMD only taking place in mRNAs bound to the CBC complex, but not on eIF4E-bound mRNAs. The CBC complex enhances NMD in mRNAs containing at least one exon-junction complex (EJC) via its interaction with UPF1, promoting the interaction between UPF1 and UPF2. The CBC complex is also involved in 'failsafe' NMD, which is independent of the EJC complex, while it does not participate in Staufen-mediated mRNA decay (SMD). During cell proliferation, the CBC complex is also involved in microRNAs (miRNAs) biogenesis via its interaction with SRRT/ARS2, thereby being required for miRNA-mediated RNA interference. The CBC complex also acts as a negative regulator of PARN, thereby acting as an inhibitor of mRNA deadenylation. In the CBC complex, NCBP2/CBP20 recognizes and binds capped RNAs (m7GpppG-capped RNA) but requires NCBP1/CBP80 to stabilize the movement of its N-terminal loop and lock the CBC into a high affinity cap-binding state with the cap structure. The conventional cap-binding complex with NCBP2 binds both small nuclear RNA (snRNA) and messenger (mRNA) and is involved in their export from the nucleus. The protein is Nuclear cap-binding protein subunit 2 (Ncbp2) of Mus musculus (Mouse).